The chain runs to 704 residues: Polyribonucleotide nucleotidyltransferase 4 (704 aa).

Asp-483 and Asp-489 together coordinate Mg(2+). Positions 550 to 609 constitute a KH domain; it reads PRVLKMKIHPDKIRDVIGSGGKTINRIIDETGVKIDIDNDGTIFIAAESQEAVEKAIIII. The 69-residue stretch at 619–687 folds into the S1 motif domain; it reads GQNYTGKVIK…QQGKINLSRK (69 aa).

It belongs to the polyribonucleotide nucleotidyltransferase family. The cofactor is Mg(2+).

The protein resides in the cytoplasm. The enzyme catalyses RNA(n+1) + phosphate = RNA(n) + a ribonucleoside 5'-diphosphate. Involved in mRNA degradation. Catalyzes the phosphorolysis of single-stranded polyribonucleotides processively in the 3'- to 5'-direction. The polypeptide is Polyribonucleotide nucleotidyltransferase 4 (Alkaliphilus metalliredigens (strain QYMF)).